The sequence spans 431 residues: MPVLTRSAELFEKAKKFIPGGVNSPVRAFKSVGGTPIYMAKGQGAYMTDVDGNTYLDYVGSWGPFILGSMHPRLTAAIEYTLRNIGTSFGTPIEIEIEIAELLCQIVPSLEMVRMVNSGTEATMSAVRLARGYTGKDKIIKFEGCYHGHGDSFLIKAGSGVLTLGDPDSPGVTKGTANDTLNATYNDIESVKAIVNENKGQVAAIIIEPVAGNTGVIPAKKEFLVALRELCDAEGIVLIFDEVMCGFRVALGGAQELYGVTPDLTTMGKIIGGGLPVGAFGGKRKIMENIAPLGSVYQAGTLSGNPLALTAGLETLKILMEENPYPELERKAAFLEAGFKDNMNKLGLNYTQNRVGSMACLFFTENEVYDYNSAITADTAKYGKYFHSMLDQGIYLAPSQFEAMFTSFVHTDEDLEKTVKANYNALVAATK.

Position 269 is an N6-(pyridoxal phosphate)lysine (K269).

This sequence belongs to the class-III pyridoxal-phosphate-dependent aminotransferase family. HemL subfamily. Homodimer. Pyridoxal 5'-phosphate is required as a cofactor.

The protein resides in the cytoplasm. It catalyses the reaction (S)-4-amino-5-oxopentanoate = 5-aminolevulinate. Its pathway is porphyrin-containing compound metabolism; protoporphyrin-IX biosynthesis; 5-aminolevulinate from L-glutamyl-tRNA(Glu): step 2/2. It functions in the pathway porphyrin-containing compound metabolism; chlorophyll biosynthesis. This is Glutamate-1-semialdehyde 2,1-aminomutase from Chlorobaculum parvum (strain DSM 263 / NCIMB 8327) (Chlorobium vibrioforme subsp. thiosulfatophilum).